The sequence spans 314 residues: MHPAGLAAAAAGTPRLRKWPSKRRIPVSQPGMADPHQLFDDTSSAQSRGYGAQRAPGGLSYPAASPTPHAAFLADPVSNMAMAYGSSLAAQGKELVDKNIDRFIPITKLKYYFAVDTMYVGRKLGLLFFPYLHQDWEVQYQQDTPVAPRFDVNAPDLYIPAMAFITYVLVAGLALGTQDRFSPDLLGLQASSALAWLTLEVLAILLSLYLVTVNTDLTTIDLVAFLGYKYVGMIGGVLMGLLFGKIGYYLVLGWCCVAIFVFMIRTLRLKILADAAAEGVPVRGARNQLRMYLTMAVAAAQPMLMYWLTFHLVR.

Residue methionine 1 is modified to N-acetylmethionine. Over residues 1-12 the composition is skewed to low complexity; that stretch reads MHPAGLAAAAAG. The segment at 1–55 is disordered; sequence MHPAGLAAAAAGTPRLRKWPSKRRIPVSQPGMADPHQLFDDTSSAQSRGYGAQRA. Topologically, residues 1–156 are cytoplasmic; it reads MHPAGLAAAA…APRFDVNAPD (156 aa). A Phosphothreonine modification is found at threonine 13. Positions 15–25 are enriched in basic residues; the sequence is RLRKWPSKRRI. Position 65 is a phosphoserine (serine 65). A helical membrane pass occupies residues 157-177; that stretch reads LYIPAMAFITYVLVAGLALGT. Topologically, residues 178–192 are extracellular; it reads QDRFSPDLLGLQASS. A helical membrane pass occupies residues 193-213; it reads ALAWLTLEVLAILLSLYLVTV. The Cytoplasmic segment spans residues 214-219; it reads NTDLTT. A helical membrane pass occupies residues 220 to 240; it reads IDLVAFLGYKYVGMIGGVLMG. Residue leucine 241 is a topological domain, extracellular. A helical transmembrane segment spans residues 242-262; it reads LFGKIGYYLVLGWCCVAIFVF. Residues 263 to 292 are Cytoplasmic-facing; that stretch reads MIRTLRLKILADAAAEGVPVRGARNQLRMY. A helical membrane pass occupies residues 293-313; it reads LTMAVAAAQPMLMYWLTFHLV. Arginine 314 is a topological domain (extracellular).

This sequence belongs to the YIF1 family. Interacts with HTR1A (via C-terminus). Interacts with ABCB9 (via TMD0); this interaction allows (but is not essential) the ER-to-Golgi trafficking and strongly depends on a salt bridge within TMD0.

The protein localises to the endoplasmic reticulum membrane. It is found in the golgi apparatus membrane. Its subcellular location is the endoplasmic reticulum-Golgi intermediate compartment membrane. Functionally, functions in endoplasmic reticulum to Golgi vesicle-mediated transport and regulates the proper organization of the endoplasmic reticulum and the Golgi. Plays a key role in targeting to neuronal dendrites receptors such as HTR1A. Plays also a role in primary cilium and sperm flagellum assembly probably through protein transport to these compartments. In Homo sapiens (Human), this protein is Protein YIF1B.